The sequence spans 2618 residues: Mediator of RNA polymerase II transcription subunit 13 (2618 aa).

3 stretches are compositionally biased toward low complexity: residues 232 to 255 (FAAA…VPNP), 509 to 519 (TPASGTGSLSA), and 532 to 543 (DSKQLVQQQIQQ). 10 disordered regions span residues 232–279 (FAAA…AAPP), 509–543 (TPAS…QIQQ), 569–731 (GNTP…SGGP), 916–957 (LNIK…AEGL), 970–995 (TSSN…NGGC), 1036–1055 (TKMF…SSPC), 1268–1384 (PRTP…TGVV), 1521–1557 (ASAS…ITGY), 1614–1633 (SRKN…LDKI), and 1985–2060 (KTLL…GETK). Phosphothreonine occurs at positions 571 and 575. Polar residues-rich tracts occupy residues 581-590 (STYSRNSLGG), 634-643 (APTSVSNLQQ), and 669-681 (SITA…QTPS). A compositionally biased stretch (gly residues) spans 692–706 (AGGGPAGGQGLGTGP). Low complexity predominate over residues 711-723 (AQQPATPTAATSA). Residues 939-949 (NSSGGGSGSGG) show a composition bias toward gly residues. Residues 1272-1295 (LTPSTVPQPLSSGGSQYLLNQLNC) show a composition bias toward polar residues. 2 stretches are compositionally biased toward gly residues: residues 1375–1384 (GLGGGATGVV) and 1528–1538 (AGSGHGHGPNG). The span at 1539–1553 (GSNSSSCTPPSSNPH) shows a compositional bias: low complexity. Over residues 1614–1629 (SRKNQNKQGPGETSSA) the composition is skewed to polar residues. The span at 1993-2014 (GSGNSHSKGGSSCSSNSSSVSG) shows a compositional bias: low complexity. Serine 2472 and serine 2475 each carry phosphoserine.

This sequence belongs to the Mediator complex subunit 13 family. Component of the Cdk8 module of the Mediator complex, composed of CycC, Cdk8, kto and skd.

Its subcellular location is the nucleus. Functionally, component of the Mediator complex, a coactivator involved in the regulated transcription of nearly all RNA polymerase II-dependent genes. Mediator functions as a bridge to convey information from gene-specific regulatory proteins to the basal RNA polymerase II transcription machinery. Mediator is recruited to promoters by direct interactions with regulatory proteins and serves as a scaffold for the assembly of a functional preinitiation complex with RNA polymerase II and the general transcription factors. Required for leg and eye development and macrochaete specification or differentiation. Negatively regulates sex comb development. Required for activated transcription of the MtnB and MtnD genes. The polypeptide is Mediator of RNA polymerase II transcription subunit 13 (skd) (Drosophila melanogaster (Fruit fly)).